The primary structure comprises 230 residues: Large ribosomal subunit protein bL25 (230 aa).

This sequence belongs to the bacterial ribosomal protein bL25 family. CTC subfamily. Part of the 50S ribosomal subunit; part of the 5S rRNA/L5/L18/L25 subcomplex. Contacts the 5S rRNA. Binds to the 5S rRNA independently of L5 and L18.

In terms of biological role, this is one of the proteins that binds to the 5S RNA in the ribosome where it forms part of the central protuberance. This chain is Large ribosomal subunit protein bL25 (rplY), found in Rhodopseudomonas palustris (strain ATCC BAA-98 / CGA009).